A 439-amino-acid polypeptide reads, in one-letter code: Innexin-19 (439 aa).

Helical transmembrane passes span 33–53 (PLIL…GTPI), 103–123 (QWVP…CIFW), 199–219 (IVYS…FFIL), and 285–305 (VFAF…CSFI).

Belongs to the pannexin family.

The protein resides in the cell membrane. It is found in the cell junction. Its subcellular location is the gap junction. Its function is as follows. Structural component of the gap junctions that specifically coordinates left-right asymmetry in the developing nervous system. Acts by forming gap junction network linking embryonic neurons and providing electrical coupling between cells, leading to promote or inhibit AWC signaling. In Caenorhabditis briggsae, this protein is Innexin-19 (inx-19).